We begin with the raw amino-acid sequence, 78 residues long: MSRVCQVTGKKPMVGNNRSHAKNATRRRFLPNLQNHRFWLEDEKRFVQLRVSTKGMRIIDKKGIEVVVAELRARGEKV.

A disordered region spans residues 1–21; sequence MSRVCQVTGKKPMVGNNRSHA.

Belongs to the bacterial ribosomal protein bL28 family.

This chain is Large ribosomal subunit protein bL28, found in Shewanella loihica (strain ATCC BAA-1088 / PV-4).